The chain runs to 133 residues: Large ribosomal subunit protein bL20 (133 aa).

Belongs to the bacterial ribosomal protein bL20 family.

Binds directly to 23S ribosomal RNA and is necessary for the in vitro assembly process of the 50S ribosomal subunit. It is not involved in the protein synthesizing functions of that subunit. This is Large ribosomal subunit protein bL20 from Bartonella henselae (strain ATCC 49882 / DSM 28221 / CCUG 30454 / Houston 1) (Rochalimaea henselae).